Reading from the N-terminus, the 131-residue chain is Small ribosomal subunit protein uS11 (131 aa).

The protein belongs to the universal ribosomal protein uS11 family. Part of the 30S ribosomal subunit. Interacts with proteins S7 and S18. Binds to IF-3.

In terms of biological role, located on the platform of the 30S subunit, it bridges several disparate RNA helices of the 16S rRNA. Forms part of the Shine-Dalgarno cleft in the 70S ribosome. The polypeptide is Small ribosomal subunit protein uS11 (Helicobacter pylori (strain P12)).